The primary structure comprises 255 residues: uncharacterized protein (255 aa).

Positions 1–22 (MNILSPIIIIIILIVLFYVMRM) are cleaved as a signal peptide.

This is an uncharacterized protein from Acanthamoeba polyphaga (Amoeba).